The primary structure comprises 660 residues: DNA ligase (660 aa).

NAD(+) is bound by residues 32 to 36, 81 to 82, and Glu112; these read DEVYD and SM. Residue Lys114 is the N6-AMP-lysine intermediate of the active site. Arg135, Glu169, Lys284, and Lys308 together coordinate NAD(+). Residues Cys402, Cys405, Cys418, and Cys423 each contribute to the Zn(2+) site. Residues 578 to 660 form the BRCT domain; sequence VENSPLAHKT…ELLKEAGIEA (83 aa).

This sequence belongs to the NAD-dependent DNA ligase family. LigA subfamily. The cofactor is Mg(2+). Requires Mn(2+) as cofactor.

The catalysed reaction is NAD(+) + (deoxyribonucleotide)n-3'-hydroxyl + 5'-phospho-(deoxyribonucleotide)m = (deoxyribonucleotide)n+m + AMP + beta-nicotinamide D-nucleotide.. In terms of biological role, DNA ligase that catalyzes the formation of phosphodiester linkages between 5'-phosphoryl and 3'-hydroxyl groups in double-stranded DNA using NAD as a coenzyme and as the energy source for the reaction. It is essential for DNA replication and repair of damaged DNA. The protein is DNA ligase of Nitratiruptor sp. (strain SB155-2).